The sequence spans 421 residues: Medium-chain specific acyl-CoA dehydrogenase, mitochondrial (421 aa).

The transit peptide at 1-25 (MAAMFRRSCRVLRSLSHFGWRSQHT) directs the protein to the mitochondrion. The residue at position 79 (Lys79) is an N6-acetyllysine. 158-167 (YCVTEPGAGS) contributes to the FAD binding site. Residue Ser167 participates in octanoyl-CoA binding. Lys179 carries the N6-succinyllysine modification. 191–193 (WIT) serves as a coordination point for FAD. N6-acetyllysine; alternate is present on Lys212. Residue Lys212 is modified to N6-succinyllysine; alternate. Ser216 serves as a coordination point for octanoyl-CoA. Lys217, Lys259, and Lys271 each carry N6-acetyllysine; alternate. An N6-succinyllysine; alternate mark is found at Lys217, Lys259, and Lys271. Asp278 is an octanoyl-CoA binding site. An N6-acetyllysine modification is found at Lys279. Residue Arg281 participates in octanoyl-CoA binding. Lys301 carries the N6-acetyllysine modification. FAD-binding positions include 306-308 (RKT) and 316-317 (HQ). Octanoyl-CoA contacts are provided by Arg349 and Thr351. Position 351 is a phosphothreonine (Thr351). 374 to 378 (QVFGG) serves as a coordination point for FAD. Glu401 lines the octanoyl-CoA pocket. Glu401 acts as the Proton acceptor in catalysis. An FAD-binding site is contributed by 402 to 405 (GTAQ).

The protein belongs to the acyl-CoA dehydrogenase family. As to quaternary structure, homotetramer. Interacts with the heterodimeric electron transfer flavoprotein ETF. The cofactor is FAD. Post-translationally, acetylated. Could occur at proximity of the cofactor-binding sites and reduce the catalytic activity. Could be deacetylated by SIRT3.

The protein localises to the mitochondrion matrix. It catalyses the reaction a medium-chain 2,3-saturated fatty acyl-CoA + oxidized [electron-transfer flavoprotein] + H(+) = a medium-chain (2E)-enoyl-CoA + reduced [electron-transfer flavoprotein]. It carries out the reaction pentanoyl-CoA + oxidized [electron-transfer flavoprotein] + H(+) = (2E)-pentenoyl-CoA + reduced [electron-transfer flavoprotein]. The catalysed reaction is hexanoyl-CoA + oxidized [electron-transfer flavoprotein] + H(+) = (2E)-hexenoyl-CoA + reduced [electron-transfer flavoprotein]. The enzyme catalyses octanoyl-CoA + oxidized [electron-transfer flavoprotein] + H(+) = (2E)-octenoyl-CoA + reduced [electron-transfer flavoprotein]. It catalyses the reaction decanoyl-CoA + oxidized [electron-transfer flavoprotein] + H(+) = (2E)-decenoyl-CoA + reduced [electron-transfer flavoprotein]. It carries out the reaction dodecanoyl-CoA + oxidized [electron-transfer flavoprotein] + H(+) = (2E)-dodecenoyl-CoA + reduced [electron-transfer flavoprotein]. The catalysed reaction is tetradecanoyl-CoA + oxidized [electron-transfer flavoprotein] + H(+) = (2E)-tetradecenoyl-CoA + reduced [electron-transfer flavoprotein]. The enzyme catalyses oxidized [electron-transfer flavoprotein] + hexadecanoyl-CoA + H(+) = (2E)-hexadecenoyl-CoA + reduced [electron-transfer flavoprotein]. It participates in lipid metabolism; mitochondrial fatty acid beta-oxidation. Functionally, medium-chain specific acyl-CoA dehydrogenase is one of the acyl-CoA dehydrogenases that catalyze the first step of mitochondrial fatty acid beta-oxidation, an aerobic process breaking down fatty acids into acetyl-CoA and allowing the production of energy from fats. The first step of fatty acid beta-oxidation consists in the removal of one hydrogen from C-2 and C-3 of the straight-chain fatty acyl-CoA thioester, resulting in the formation of trans-2-enoyl-CoA. Electron transfer flavoprotein (ETF) is the electron acceptor that transfers electrons to the main mitochondrial respiratory chain via ETF-ubiquinone oxidoreductase (ETF dehydrogenase). Among the different mitochondrial acyl-CoA dehydrogenases, medium-chain specific acyl-CoA dehydrogenase acts specifically on acyl-CoAs with saturated 6 to 12 carbons long primary chains. This Sus scrofa (Pig) protein is Medium-chain specific acyl-CoA dehydrogenase, mitochondrial.